Reading from the N-terminus, the 99-residue chain is A-type ATP synthase subunit F (99 aa).

Belongs to the V-ATPase F subunit family. Has multiple subunits with at least A(3), B(3), C, D, E, F, H, I and proteolipid K(x).

It localises to the cell membrane. Functionally, component of the A-type ATP synthase that produces ATP from ADP in the presence of a proton gradient across the membrane. In Methanococcus aeolicus (strain ATCC BAA-1280 / DSM 17508 / OCM 812 / Nankai-3), this protein is A-type ATP synthase subunit F.